A 267-amino-acid chain; its full sequence is Adenosine 5'-phosphosulfate reductase (267 aa).

The tract at residues 1 to 29 (MPPFATIPATERNSAAQHQDPSPMSQPFD) is disordered. A compositionally biased stretch (polar residues) spans 11-25 (ERNSAAQHQDPSPMS). Residues cysteine 139, cysteine 140, cysteine 228, and cysteine 231 each coordinate [4Fe-4S] cluster. Cysteine 256 serves as the catalytic Nucleophile; cysteine thiosulfonate intermediate.

Belongs to the PAPS reductase family. CysH subfamily. [4Fe-4S] cluster serves as cofactor.

The protein localises to the cytoplasm. It catalyses the reaction [thioredoxin]-disulfide + sulfite + AMP + 2 H(+) = adenosine 5'-phosphosulfate + [thioredoxin]-dithiol. It functions in the pathway sulfur metabolism; hydrogen sulfide biosynthesis; sulfite from sulfate. Functionally, catalyzes the formation of sulfite from adenosine 5'-phosphosulfate (APS) using thioredoxin as an electron donor. This is Adenosine 5'-phosphosulfate reductase from Pseudomonas aeruginosa (strain LESB58).